We begin with the raw amino-acid sequence, 37 residues long: MKVRPSVKPICEKCKIIRRKGRIMVICENPKHKQAQG.

This sequence belongs to the bacterial ribosomal protein bL36 family.

The polypeptide is Large ribosomal subunit protein bL36 (Pelotomaculum thermopropionicum (strain DSM 13744 / JCM 10971 / SI)).